The chain runs to 361 residues: D-alanine--D-alanine ligase (361 aa).

In terms of domain architecture, ATP-grasp spans Lys-134–Asp-344. An ATP-binding site is contributed by Lys-167–Glu-222. Residues Asp-297, Glu-311, and Asn-313 each contribute to the Mg(2+) site.

This sequence belongs to the D-alanine--D-alanine ligase family. Mg(2+) is required as a cofactor. It depends on Mn(2+) as a cofactor.

The protein resides in the cytoplasm. It carries out the reaction 2 D-alanine + ATP = D-alanyl-D-alanine + ADP + phosphate + H(+). It functions in the pathway cell wall biogenesis; peptidoglycan biosynthesis. Cell wall formation. This chain is D-alanine--D-alanine ligase, found in Borreliella burgdorferi (strain ATCC 35210 / DSM 4680 / CIP 102532 / B31) (Borrelia burgdorferi).